A 644-amino-acid polypeptide reads, in one-letter code: Probable potassium transport system protein Kup 2 (644 aa).

The interval 1–21 is disordered; it reads MSSDAAAVADRDGSSPGHGGH. The next 12 membrane-spanning stretches (helical) occupy residues 26–46, 69–89, 120–140, 155–175, 183–203, 231–251, 265–285, 312–332, 360–380, 390–410, 419–439, and 444–464; these read LGAM…TSPL, VLSL…VAII, IILL…ITPA, AGFA…LFMI, VGML…VLGT, LAFL…ALYA, WLVF…AMIL, LVIL…TGAF, IYIP…VMSF, YGIA…VVLI, LAAP…GANL, and DGGW…TTWG.

It belongs to the HAK/KUP transporter (TC 2.A.72) family.

The protein localises to the cell inner membrane. The catalysed reaction is K(+)(in) + H(+)(in) = K(+)(out) + H(+)(out). Transport of potassium into the cell. Likely operates as a K(+):H(+) symporter. This chain is Probable potassium transport system protein Kup 2, found in Rhizorhabdus wittichii (strain DSM 6014 / CCUG 31198 / JCM 15750 / NBRC 105917 / EY 4224 / RW1) (Sphingomonas wittichii).